A 68-amino-acid chain; its full sequence is uncharacterized protein (68 aa).

The interval 1-27 (MNEFEKWIEGRYEPHEQKQKEHEDTMG) is disordered.

This is an uncharacterized protein from Bacillus subtilis (strain 168).